Reading from the N-terminus, the 66-residue chain is Large ribosomal subunit protein bL33c (66 aa).

This sequence belongs to the bacterial ribosomal protein bL33 family.

The protein localises to the plastid. It localises to the chloroplast. This Arabidopsis thaliana (Mouse-ear cress) protein is Large ribosomal subunit protein bL33c (rpl33).